Consider the following 236-residue polypeptide: Endonuclease NucS (236 aa).

The protein belongs to the NucS endonuclease family.

The protein resides in the cytoplasm. In terms of biological role, cleaves both 3' and 5' ssDNA extremities of branched DNA structures. This Saccharolobus solfataricus (strain ATCC 35092 / DSM 1617 / JCM 11322 / P2) (Sulfolobus solfataricus) protein is Endonuclease NucS.